A 668-amino-acid polypeptide reads, in one-letter code: DNA ligase (668 aa).

NAD(+) is bound by residues 37–41 (DNVYD), 86–87 (SM), and Glu-116. Lys-118 functions as the N6-AMP-lysine intermediate in the catalytic mechanism. NAD(+) is bound by residues Arg-139, Glu-173, Lys-288, and Lys-312. The Zn(2+) site is built by Cys-406, Cys-409, Cys-424, and Cys-429. The 78-residue stretch at 591-668 (APDNPFKDKT…TEEEAIAQIE (78 aa)) folds into the BRCT domain.

It belongs to the NAD-dependent DNA ligase family. LigA subfamily. Requires Mg(2+) as cofactor. Mn(2+) is required as a cofactor.

The catalysed reaction is NAD(+) + (deoxyribonucleotide)n-3'-hydroxyl + 5'-phospho-(deoxyribonucleotide)m = (deoxyribonucleotide)n+m + AMP + beta-nicotinamide D-nucleotide.. Functionally, DNA ligase that catalyzes the formation of phosphodiester linkages between 5'-phosphoryl and 3'-hydroxyl groups in double-stranded DNA using NAD as a coenzyme and as the energy source for the reaction. It is essential for DNA replication and repair of damaged DNA. This Lactobacillus helveticus (strain DPC 4571) protein is DNA ligase.